Here is a 231-residue protein sequence, read N- to C-terminus: ADP-ribose pyrophosphatase (231 aa).

Phe-2 carries the post-translational modification N-acetylserine. Residues Trp-46, 64–65 (WD), Arg-69, and Arg-103 each bind substrate. A Nudix hydrolase domain is found at 75–214 (GGVDGIGILT…DQQGYKLDAR (140 aa)). Ala-115 provides a ligand contact to Mg(2+). Positions 116–137 (GLIDAGEDIDTAALRELKEETG) match the Nudix box motif. Substrate is bound at residue Leu-117. Glu-131 and Glu-135 together coordinate Mg(2+). Residue Asp-152 participates in substrate binding. Glu-185 provides a ligand contact to Mg(2+).

Belongs to the Nudix hydrolase family. NudF subfamily. Mg(2+) serves as cofactor. Requires Mn(2+) as cofactor.

The enzyme catalyses ADP-D-ribose + H2O = D-ribose 5-phosphate + AMP + 2 H(+). The protein is ADP-ribose pyrophosphatase (YSA1) of Saccharomyces cerevisiae (strain ATCC 204508 / S288c) (Baker's yeast).